A 1017-amino-acid chain; its full sequence is Protein HIRA (1017 aa).

WD repeat units follow at residues 11–53 (HNGK…QEDD) and 68–107 (NHLA…GPST). A Phosphoserine modification is found at Ser-111. WD repeat units follow at residues 129–168 (NHSG…EILA), 172–211 (GHSG…LETS), 220–263 (GGTT…TNMD), 266–322 (GHRK…PLVV), and 326–367 (LFDK…DPLS). The interaction with ASF1A stretch occupies residues 421–479 (REMGSATSVAGVVNGESLEDIRKNLLKKQVETRTADGRRRITPLCIAQLDTGDFSTAFF). Residues 421 to 729 (REMGSATSVA…RLKCNREGKE (309 aa)) are interaction with CCNA1. Residues 439–475 (EDIRKNLLKKQVETRTADGRRRITPLCIAQLDTGDFS) form a required for repression of histone gene transcription region. A compositionally biased stretch (low complexity) spans 494-509 (SSHSSPQLLPLDSSTP). A disordered region spans residues 494–555 (SSHSSPQLLP…AALSPSVLTT (62 aa)). Polar residues predominate over residues 536–555 (KDSMNATSTPAALSPSVLTT). Ser-549 is modified (phosphoserine). Thr-555 is subject to Phosphothreonine; by CDK2. At Ser-557 the chain carries Phosphoserine. Disordered stretches follow at residues 570-589 (TERS…TPTA) and 604-625 (PRDL…KASS). Thr-576 is subject to Phosphothreonine. Ser-584 bears the Phosphoserine mark. Residue Thr-586 is modified to Phosphothreonine. The interval 593–826 (LKEQNLVKEL…LAGSDMTVSQ (234 aa)) is interaction with histone H2B. Interaction with PAX3 regions lie at residues 594–739 (KEQN…SRIL) and 740–828 (TAAG…SQIL). The span at 604–619 (PRDLLESSSDSDEKVP) shows a compositional bias: basic and acidic residues. Residues Ser-610, Ser-611, Ser-612, Ser-614, Ser-661, Ser-675, and Ser-687 each carry the phosphoserine modification. Residues 738 to 1017 (ILTAAGSCDV…QEQLDILRDK (280 aa)) are interaction with histone H4.

Belongs to the WD repeat HIR1 family. In terms of assembly, interacts with histone H3-3B, PAX3 and PAX7. Interacts with histone H3.Y. Interacts with CCNA1, HIRIP3, NFU1/HIRIP5 and histone H2B. Part of a complex which includes ASF1A, CABIN1, histone H3.3, histone H4 and UBN1. In terms of processing, sumoylated. Phosphorylated by CDK2/CCNA1 and CDK2/CCNE1 on Thr-555 in vitro. Also phosphorylated on Thr-555 and Ser-687 in vivo. In terms of tissue distribution, expressed at high levels in kidney, pancreas and skeletal muscle and at lower levels in brain, heart, liver, lung, and placenta.

Its subcellular location is the nucleus. It localises to the PML body. Its function is as follows. Cooperates with ASF1A to promote replication-independent chromatin assembly. Required for the periodic repression of histone gene transcription during the cell cycle. Required for the formation of senescence-associated heterochromatin foci (SAHF) and efficient senescence-associated cell cycle exit. This is Protein HIRA (HIRA) from Homo sapiens (Human).